A 291-amino-acid chain; its full sequence is MMTQSIRRSMLTVMATLPLLFSSATLHAQANSVQQQLEALEKSSGGRLGVALINTADNSQILYRADERFAMCSTSKVMAAAAVLKQSESDKHLLNQRVEIKKSDLVNYNPIAEKHVNGTMTLAELGAAALQYSDNTAMNKLIAHLGGPDKVTAFARSLGDETFRLDRTEPTLNTAIPGDPRDTTTPLAMAQTLKNLTLGKALAETQRAQLVTWLKGNTTGSASIRAGLPKSWVVGDKTGSGDYGTTNDIAVIWPENHAPLVLVTYFTQPEQKAERRRDILAAAAKIVTHGF.

The N-terminal stretch at 1–29 (MMTQSIRRSMLTVMATLPLLFSSATLHAQ) is a signal peptide. Serine 73 serves as the catalytic Acyl-ester intermediate. 237-239 (KTG) contacts substrate.

The protein belongs to the class-A beta-lactamase family. As to quaternary structure, monomer.

The catalysed reaction is a beta-lactam + H2O = a substituted beta-amino acid. In terms of biological role, has strong cefotaxime-hydrolyzing activity. The sequence is that of Beta-lactamase Toho-1 (bla) from Escherichia coli.